We begin with the raw amino-acid sequence, 319 residues long: tRNA pseudouridine synthase B (319 aa).

Asp-47 functions as the Nucleophile in the catalytic mechanism.

The protein belongs to the pseudouridine synthase TruB family. Type 1 subfamily.

It carries out the reaction uridine(55) in tRNA = pseudouridine(55) in tRNA. Its function is as follows. Responsible for synthesis of pseudouridine from uracil-55 in the psi GC loop of transfer RNAs. In Pseudoalteromonas translucida (strain TAC 125), this protein is tRNA pseudouridine synthase B.